The primary structure comprises 333 residues: Protoheme IX farnesyltransferase (333 aa).

Helical transmembrane passes span 64 to 84 (LICTLGGGALAAAAAGALNCL), 110 to 130 (TVFLAAVSCTLAASMLLVSGV), 133 to 153 (LAAGLTLLGLFSYVILYTVIL), 161 to 181 (IVFGGVAGAIPPLVGASAATG), 189 to 209 (WLFGLVMLWTPAHFWALAILL), 246 to 266 (IMGVFALPEGGLLYGIMLLPF), and 287 to 307 (AKSLFRWSILYMFGICLLLLI).

The protein belongs to the UbiA prenyltransferase family. Protoheme IX farnesyltransferase subfamily.

It is found in the cell inner membrane. The catalysed reaction is heme b + (2E,6E)-farnesyl diphosphate + H2O = Fe(II)-heme o + diphosphate. Its pathway is porphyrin-containing compound metabolism; heme O biosynthesis; heme O from protoheme: step 1/1. Functionally, converts heme B (protoheme IX) to heme O by substitution of the vinyl group on carbon 2 of heme B porphyrin ring with a hydroxyethyl farnesyl side group. In Prochlorococcus marinus (strain AS9601), this protein is Protoheme IX farnesyltransferase.